Here is a 727-residue protein sequence, read N- to C-terminus: Elongation factor 2 (727 aa).

The 242-residue stretch at 19-260 (DQIRNMGICA…MAITHLPNPL (242 aa)) folds into the tr-type G domain. GTP is bound by residues 28–35 (AHIDHGKT), 94–98 (DTPGH), and 148–151 (NKVD). Diphthamide is present on H603.

This sequence belongs to the TRAFAC class translation factor GTPase superfamily. Classic translation factor GTPase family. EF-G/EF-2 subfamily.

It is found in the cytoplasm. In terms of biological role, catalyzes the GTP-dependent ribosomal translocation step during translation elongation. During this step, the ribosome changes from the pre-translocational (PRE) to the post-translocational (POST) state as the newly formed A-site-bound peptidyl-tRNA and P-site-bound deacylated tRNA move to the P and E sites, respectively. Catalyzes the coordinated movement of the two tRNA molecules, the mRNA and conformational changes in the ribosome. This is Elongation factor 2 from Methanococcus maripaludis (strain C6 / ATCC BAA-1332).